The sequence spans 463 residues: Chaperone SurA (463 aa).

The first 25 residues, 1 to 25, serve as a signal peptide directing secretion; it reads MTKPFSVVLASLLAITSTVSPLASA. PpiC domains follow at residues 174–276 and 289–388; these read GSQY…KLVE and VTEY…QRVG. 2 disordered regions span residues 329-348 and 431-463; these read ATAK…GDLG and YRTG…KPTR. The segment covering 441 to 450 has biased composition (low complexity); that stretch reads ATAAPAKSPD. Positions 451-463 are enriched in pro residues; sequence PAAPSPPPAKPTR.

It localises to the periplasm. It carries out the reaction [protein]-peptidylproline (omega=180) = [protein]-peptidylproline (omega=0). Its function is as follows. Chaperone involved in the correct folding and assembly of outer membrane proteins. Recognizes specific patterns of aromatic residues and the orientation of their side chains, which are found more frequently in integral outer membrane proteins. May act in both early periplasmic and late outer membrane-associated steps of protein maturation. The protein is Chaperone SurA of Xanthomonas axonopodis pv. citri (strain 306).